The chain runs to 319 residues: Heavy metal-associated isoprenylated plant protein 9 (319 aa).

Basic and acidic residues-rich tracts occupy residues 1-11 and 24-45; these read MGEEVKPEAKE and EEKK…KPKE. The tract at residues 1 to 57 is disordered; the sequence is MGEEVKPEAKEAASAPQAVPAEEEEKKKDVAEEKKVAAEEEKPKEEEEPQPPPPPPP. Residues 21–48 adopt a coiled-coil conformation; that stretch reads AEEEEKKKDVAEEKKVAAEEEKPKEEEE. 2 consecutive HMA domains span residues 55–118 and 144–208; these read PPPF…KRMA and LTTV…KQAR. C66, C69, C155, and C158 together coordinate a metal cation. Residues 207 to 282 form a disordered region; the sequence is ARIVPQPDPE…RDNEMTAMAQ (76 aa). The span at 224 to 254 shows a compositional bias: basic and acidic residues; that stretch reads QEEKKEESGEGNEKPPETGEEKEEEKKKEGE. Residues 255–268 are compositionally biased toward acidic residues; it reads ENGEEGGGEEAAAT. Position 316 is a cysteine methyl ester (C316). A lipid anchor (S-farnesyl cysteine) is attached at C316. A propeptide spans 317 to 319 (removed in mature form); that stretch reads CIS.

This sequence belongs to the HIPP family.

Heavy-metal-binding protein. The polypeptide is Heavy metal-associated isoprenylated plant protein 9 (Arabidopsis thaliana (Mouse-ear cress)).